The chain runs to 301 residues: UDP-N-acetylenolpyruvoylglucosamine reductase 1 (301 aa).

Residues K29–G196 enclose the FAD-binding PCMH-type domain. The active site involves R174. S225 functions as the Proton donor in the catalytic mechanism. Residue E295 is part of the active site.

The protein belongs to the MurB family. The cofactor is FAD.

It localises to the cytoplasm. It catalyses the reaction UDP-N-acetyl-alpha-D-muramate + NADP(+) = UDP-N-acetyl-3-O-(1-carboxyvinyl)-alpha-D-glucosamine + NADPH + H(+). Its pathway is cell wall biogenesis; peptidoglycan biosynthesis. In terms of biological role, cell wall formation. In Bacillus anthracis, this protein is UDP-N-acetylenolpyruvoylglucosamine reductase 1 (murB1).